The primary structure comprises 272 residues: Small ribosomal subunit protein uS2 (272 aa).

Residues 251-272 are disordered; that stretch reads LLTEGAPAAEAPAEAEGETKAE. A compositionally biased stretch (low complexity) spans 253 to 264; the sequence is TEGAPAAEAPAE.

The protein belongs to the universal ribosomal protein uS2 family.

The chain is Small ribosomal subunit protein uS2 from Bifidobacterium adolescentis (strain ATCC 15703 / DSM 20083 / NCTC 11814 / E194a).